The primary structure comprises 354 residues: Guanine nucleotide-binding protein subunit alpha-14 (354 aa).

The 322-residue stretch at 33-354 (RELKLLLLGT…QLNLREFNLV (322 aa)) folds into the G-alpha domain. Positions 36–49 (KLLLLGTGESGKST) are G1 motif. GTP-binding positions include 41–48 (GTGESGKS), 175–181 (LRVRVPT), 200–204 (DVGGQ), 269–272 (NKKD), and alanine 326. 2 residues coordinate Mg(2+): serine 48 and threonine 181. Residues 173–181 (DVLRVRVPT) are G2 motif. The segment at 196-205 (FRMVDVGGQR) is G3 motif. The G4 motif stretch occupies residues 265 to 272 (ILFLNKKD). The segment at 324 to 329 (TCATDT) is G5 motif.

This sequence belongs to the G-alpha family. G(q) subfamily. G proteins are composed of 3 units; alpha, beta and gamma. The alpha chain contains the guanine nucleotide binding site.

Guanine nucleotide-binding proteins (G proteins) are involved as modulators or transducers in various transmembrane signaling systems. Acts as an activator of phospholipase C. Mediates responses to trypsin. In Xenopus laevis (African clawed frog), this protein is Guanine nucleotide-binding protein subunit alpha-14 (gna14).